Consider the following 145-residue polypeptide: 3-dehydroquinate dehydratase (145 aa).

The active-site Proton acceptor is Tyr24. The substrate site is built by Asn76, His82, and Asp89. His102 (proton donor) is an active-site residue. Substrate is bound by residues 103-104 (VS) and Arg113.

The protein belongs to the type-II 3-dehydroquinase family. Homododecamer.

It carries out the reaction 3-dehydroquinate = 3-dehydroshikimate + H2O. It participates in metabolic intermediate biosynthesis; chorismate biosynthesis; chorismate from D-erythrose 4-phosphate and phosphoenolpyruvate: step 3/7. Catalyzes a trans-dehydration via an enolate intermediate. In Herminiimonas arsenicoxydans, this protein is 3-dehydroquinate dehydratase.